The following is a 1824-amino-acid chain: E3 ubiquitin-protein ligase UBR1 (1824 aa).

The UBR-type zinc finger occupies 107–178 (TVCGKVFKNG…KDQYCELHLA (72 aa)). Disordered regions lie at residues 1006-1043 (KQAP…ENRA) and 1073-1093 (ADTE…DWED). A compositionally biased stretch (basic and acidic residues) spans 1033-1043 (EQAREERENRA). The RING-type; atypical zinc finger occupies 1126 to 1220 (FKCILCFENC…VEFQCPYCRT (95 aa)).

The protein belongs to the E3 ubiquitin-protein ligase UBR1-like family.

The catalysed reaction is S-ubiquitinyl-[E2 ubiquitin-conjugating enzyme]-L-cysteine + [acceptor protein]-L-lysine = [E2 ubiquitin-conjugating enzyme]-L-cysteine + N(6)-ubiquitinyl-[acceptor protein]-L-lysine.. It functions in the pathway protein modification; protein ubiquitination. E3 ubiquitin-protein ligase which is a component of the N-end rule pathway. Recognizes and binds to proteins bearing specific N-terminal residues that are destabilizing according to the N-end rule, leading to their ubiquitination and subsequent degradation. The protein is E3 ubiquitin-protein ligase UBR1 of Drosophila melanogaster (Fruit fly).